A 403-amino-acid polypeptide reads, in one-letter code: D-galactonate dehydratase family member ManD (403 aa).

Residues N37 and H122 each contribute to the substrate site. The active-site Proton donor/acceptor is the Y159. D211 is a Mg(2+) binding site. Residue H213 is the Proton donor/acceptor of the active site. Residues E237 and E263 each contribute to the Mg(2+) site. Substrate contacts are provided by E263, R284, H313, D317, and E340.

The protein belongs to the mandelate racemase/muconate lactonizing enzyme family. GalD subfamily. Requires Mg(2+) as cofactor.

It catalyses the reaction D-mannonate = 2-dehydro-3-deoxy-D-gluconate + H2O. The catalysed reaction is D-gluconate = 2-dehydro-3-deoxy-D-gluconate + H2O. In terms of biological role, has low dehydratase activity with D-mannonate and D-gluconate, suggesting that these are not physiological substrates and that it has no significant role in the in vivo degradation of these compounds. Has no detectable activity with a panel of 70 other acid sugars (in vitro). This is D-galactonate dehydratase family member ManD (manD) from Chromohalobacter salexigens (strain ATCC BAA-138 / DSM 3043 / CIP 106854 / NCIMB 13768 / 1H11).